A 203-amino-acid polypeptide reads, in one-letter code: Urease accessory protein UreG (203 aa).

Gly10 to Thr17 lines the GTP pocket.

This sequence belongs to the SIMIBI class G3E GTPase family. UreG subfamily. As to quaternary structure, homodimer. UreD, UreF and UreG form a complex that acts as a GTP-hydrolysis-dependent molecular chaperone, activating the urease apoprotein by helping to assemble the nickel containing metallocenter of UreC. The UreE protein probably delivers the nickel.

The protein resides in the cytoplasm. Its function is as follows. Facilitates the functional incorporation of the urease nickel metallocenter. This process requires GTP hydrolysis, probably effectuated by UreG. This Micrococcus luteus (strain ATCC 4698 / DSM 20030 / JCM 1464 / CCM 169 / CCUG 5858 / IAM 1056 / NBRC 3333 / NCIMB 9278 / NCTC 2665 / VKM Ac-2230) (Micrococcus lysodeikticus) protein is Urease accessory protein UreG.